Consider the following 448-residue polypeptide: Protein giant (448 aa).

Disordered regions lie at residues 23–47 (MHHHQYQHHQQQPLHHLPHSQLPVQ), 83–134 (QQHQ…ASPT), 238–259 (VEATTPTTSSSGEAGKNTRPFK), and 298–363 (IRSS…TSSS). The segment covering 30–47 (HHQQQPLHHLPHSQLPVQ) has biased composition (low complexity). Residues 100–112 (DLSRRCDSVETPR) are compositionally biased toward basic and acidic residues. The segment covering 115 to 134 (PSPYQTSYSYGSGSPSASPT) has biased composition (low complexity). Residues 298–310 (IRSSNGGSRTVTN) are compositionally biased toward polar residues. Over residues 318–333 (SRSGSVNEGSSSNNNS) the composition is skewed to low complexity. In terms of domain architecture, bZIP spans 384-447 (DAAYYERRRK…AAFTSAKVTT (64 aa)). Positions 390-406 (RRRKNNAAAKKSRDRRR) are basic motif. Residues 407 to 414 (IKEDEIAI) form a leucine-zipper region.

Belongs to the bZIP family. In terms of assembly, homodimer or heterodimer. Phosphorylated at multiple sites.

The protein resides in the nucleus. Represses the expression of both the krueppel and knirps segmentation gap genes. Binds, in vitro, to the krueppel regulatory elements CD1 and CD2. It is required in the early embryo for the development of portions of the head and abdomen. The chain is Protein giant (gt) from Drosophila melanogaster (Fruit fly).